We begin with the raw amino-acid sequence, 289 residues long: MSGFSTEERAAPFSLEYRVFLKNEKGQYISPFHDIPIYADKDVFHMVVEVPRWSNAKMEIATKDPLNPIKQDVKKRKLRYVANLFPYKGYIWNYGAIPQTWEDPGHNDKHTGCCGDNDPIDVCEIGSKVCARGEIIGVKVLGILAMIDEGETDWKVIAINMDDPDAANYNDINDVKRLKPGYLEATVDWFRRYKVPDGKPENEFAFNAEFKDKDFAIDIIKSTHDHWKALVTKKTNGKGISCMNTTVSESPLKCDPDAARAIVDALPPPCESACTVPTDVDKWFHHQKN.

An N-acetylserine modification is found at Ser2. An N6-acetyllysine modification is found at Lys57. Asp116, Asp121, and Asp153 together coordinate Mg(2+). Lys228 bears the N6-acetyllysine mark. Position 250 is a phosphoserine (Ser250).

It belongs to the PPase family. Homodimer. Mg(2+) serves as cofactor.

The protein resides in the cytoplasm. The catalysed reaction is diphosphate + H2O = 2 phosphate + H(+). The chain is Inorganic pyrophosphatase (PPA1) from Pongo abelii (Sumatran orangutan).